We begin with the raw amino-acid sequence, 616 residues long: Xaa-Pro aminopeptidase app-1 (616 aa).

Positions 78 and 392 each coordinate a peptide. D413, D424, and H487 together coordinate Zn(2+). Residues H487, H496, and E522 each contribute to the a peptide site. Positions 522 and 536 each coordinate Zn(2+).

The protein belongs to the peptidase M24B family. In terms of assembly, homodimer. May interact with pid-2, pid-4 and pid-5. The cofactor is Zn(2+). As to expression, specifically expressed in the intestine.

The protein localises to the cytoplasm. It catalyses the reaction Release of any N-terminal amino acid, including proline, that is linked to proline, even from a dipeptide or tripeptide.. With respect to regulation, strongly inhibited by the metal ion chelators EDTA and 1,10-phenanthroline. Also inhibited by apstatin. Activity towards bradykinin is inhibited by Mn(2+) and Zn(2+) at all concentrations tested, whereas Co(2+) is inhibitory at concentrations above 100 uM and activatory at 10 uM. Functionally, catalyzes the removal of a penultimate prolyl residue from the N-termini of peptides, such as Arg-Pro-Pro. Has activity towards the flp-9 neuropeptide KPSFVRF-amide. The sequence is that of Xaa-Pro aminopeptidase app-1 from Caenorhabditis elegans.